We begin with the raw amino-acid sequence, 72 residues long: Protein P13 (72 aa).

Its subcellular location is the virion membrane. In Pseudomonas phage phi6 (Bacteriophage phi-6), this protein is Protein P13 (P13).